A 232-amino-acid polypeptide reads, in one-letter code: Lipoprotein-releasing system ATP-binding protein LolD (232 aa).

The ABC transporter domain maps to 11–232 (IEVTDLQRAF…LHDGRLIEEY (222 aa)). 47–54 (GPSGAGKS) contributes to the ATP binding site.

The protein belongs to the ABC transporter superfamily. Lipoprotein translocase (TC 3.A.1.125) family. In terms of assembly, the complex is composed of two ATP-binding proteins (LolD) and two transmembrane proteins (LolC and LolE).

Its subcellular location is the cell inner membrane. Its function is as follows. Part of the ABC transporter complex LolCDE involved in the translocation of mature outer membrane-directed lipoproteins, from the inner membrane to the periplasmic chaperone, LolA. Responsible for the formation of the LolA-lipoprotein complex in an ATP-dependent manner. The polypeptide is Lipoprotein-releasing system ATP-binding protein LolD (Zymomonas mobilis subsp. mobilis (strain ATCC 10988 / DSM 424 / LMG 404 / NCIMB 8938 / NRRL B-806 / ZM1)).